Here is a 1324-residue protein sequence, read N- to C-terminus: Structural maintenance of chromosomes protein 4 (1324 aa).

Residues methionine 1–glutamate 24 form a disordered region. A Phosphothreonine; by CDC2 modification is found at threonine 19. Position 155–162 (glycine 155–serine 162) interacts with ATP. 2 coiled-coil regions span residues glutamine 310–glutamate 337 and asparagine 370–leucine 628. The SMC hinge domain maps to asparagine 651–alanine 764. Coiled coils occupy residues tyrosine 825–leucine 1077 and leucine 1297–aspartate 1324.

Belongs to the SMC family. SMC4 subfamily. In terms of assembly, forms a heterodimer with cut14/smc2. Component of the condensin complex, which contains the smc2 and smc4 heterodimer, and three non smc subunits that probably regulate the complex: cnd1, cnd2 and cnd3. Interacts with C1739.07. Phosphorylated by CDC2 on Thr-19 at metaphase.

The protein resides in the nucleus. It is found in the cytoplasm. The protein localises to the chromosome. Central component of the condensin complex, a complex required for conversion of interphase chromatin into mitotic-like condense chromosomes. The condensin complex probably introduces positive supercoils into relaxed DNA in the presence of type I topoisomerases and converts nicked DNA into positive knotted forms in the presence of type II topoisomerases. The chain is Structural maintenance of chromosomes protein 4 (cut3) from Schizosaccharomyces pombe (strain 972 / ATCC 24843) (Fission yeast).